Reading from the N-terminus, the 393-residue chain is Probable galacturonosyltransferase-like 8 (393 aa).

Residues 1 to 4 (MSSR) lie on the Cytoplasmic side of the membrane. Residues 5 to 25 (FSLTVVCLIALLPFVVGIRLI) traverse the membrane as a helical; Signal-anchor for type II membrane protein segment. Residues 26–393 (PARITSVGDG…SELTDDSSFL (368 aa)) lie on the Lumenal side of the membrane. N-linked (GlcNAc...) asparagine glycosylation is present at N226.

Belongs to the glycosyltransferase 8 family.

The protein localises to the golgi apparatus membrane. Its pathway is glycan metabolism; pectin biosynthesis. Functionally, may be involved in pectin and/or xylans biosynthesis in cell walls. The polypeptide is Probable galacturonosyltransferase-like 8 (GATL8) (Arabidopsis thaliana (Mouse-ear cress)).